Consider the following 513-residue polypeptide: Activin receptor type-2A (513 aa).

The N-terminal stretch at 1 to 19 (MGAAAKLAFAVFLISCSSG) is a signal peptide. Over 20-135 (AILGRSETQE…TSNPVTPKPP (116 aa)) the chain is Extracellular. 5 cysteine pairs are disulfide-bonded: cysteine 30–cysteine 60, cysteine 50–cysteine 78, cysteine 85–cysteine 104, cysteine 91–cysteine 103, and cysteine 105–cysteine 110. Asparagine 43 and asparagine 66 each carry an N-linked (GlcNAc...) asparagine glycan. The chain crosses the membrane as a helical span at residues 136–161 (YYNILLYSLVPLMLIAGIVICAFWVY). Residues 162–513 (RHHKMAYPPV…VDFPPKESSL (352 aa)) lie on the Cytoplasmic side of the membrane. One can recognise a Protein kinase domain in the interval 192–485 (LQLLEVKARG…GERITQMQRL (294 aa)). ATP contacts are provided by residues 198 to 206 (KARGRFGCV) and lysine 219. The active-site Proton acceptor is aspartate 322.

Belongs to the protein kinase superfamily. TKL Ser/Thr protein kinase family. TGFB receptor subfamily. Part of a complex consisting of MAGI2/ARIP1, ACVR2A, ACVR1B and SMAD3. Interacts with MAGI2/ARIP1. Interacts with type I receptor ACVR1. Interacts with BMP7. Interacts with TSC22D1/TSC-22. Interacts with activin A/INHBA. It depends on Mg(2+) as a cofactor. Mn(2+) serves as cofactor.

It localises to the cell membrane. It catalyses the reaction L-threonyl-[receptor-protein] + ATP = O-phospho-L-threonyl-[receptor-protein] + ADP + H(+). The catalysed reaction is L-seryl-[receptor-protein] + ATP = O-phospho-L-seryl-[receptor-protein] + ADP + H(+). On ligand binding, forms a receptor complex consisting of two type II and two type I transmembrane serine/threonine kinases. Type II receptors phosphorylate and activate type I receptors which autophosphorylate, then bind and activate SMAD transcriptional regulators. Receptor for activin A, activin B and inhibin A. Mediates induction of adipogenesis by GDF6. In Homo sapiens (Human), this protein is Activin receptor type-2A.